A 388-amino-acid chain; its full sequence is Succinate--CoA ligase [ADP-forming] subunit beta (388 aa).

The 236-residue stretch at 9–244 (KQLFAEYGLP…PSQEDEREAH (236 aa)) folds into the ATP-grasp domain. ATP-binding positions include Lys-46, 53–55 (GRG), Glu-99, Thr-102, and Glu-107. Residues Asn-199 and Asp-213 each contribute to the Mg(2+) site. Substrate-binding positions include Asn-264 and 321–323 (GIV).

This sequence belongs to the succinate/malate CoA ligase beta subunit family. In terms of assembly, heterotetramer of two alpha and two beta subunits. The cofactor is Mg(2+).

The catalysed reaction is succinate + ATP + CoA = succinyl-CoA + ADP + phosphate. The enzyme catalyses GTP + succinate + CoA = succinyl-CoA + GDP + phosphate. It functions in the pathway carbohydrate metabolism; tricarboxylic acid cycle; succinate from succinyl-CoA (ligase route): step 1/1. Functionally, succinyl-CoA synthetase functions in the citric acid cycle (TCA), coupling the hydrolysis of succinyl-CoA to the synthesis of either ATP or GTP and thus represents the only step of substrate-level phosphorylation in the TCA. The beta subunit provides nucleotide specificity of the enzyme and binds the substrate succinate, while the binding sites for coenzyme A and phosphate are found in the alpha subunit. This is Succinate--CoA ligase [ADP-forming] subunit beta from Saccharophagus degradans (strain 2-40 / ATCC 43961 / DSM 17024).